A 582-amino-acid polypeptide reads, in one-letter code: ATP-dependent lipid A-core flippase (582 aa).

6 helical membrane-spanning segments follow: residues 27–48 (LVVS…ISLL), 63–85 (FLRI…GFAS), 144–168 (VSIV…WQLS), 170–188 (VLIV…VSKR), 244–266 (LVSA…LFAV), and 283–302 (TFTV…KALT). Positions 28 to 310 (VVSTIALVIN…LTSVTSEFQR (283 aa)) constitute an ABC transmembrane type-1 domain. Residues 342 to 578 (VDVKDVTFTY…DGAYAQLHRI (237 aa)) form the ABC transporter domain. An ATP-binding site is contributed by 376-383 (GRSGSGKS).

Belongs to the ABC transporter superfamily. Lipid exporter (TC 3.A.1.106) family. As to quaternary structure, homodimer.

It is found in the cell inner membrane. It catalyses the reaction ATP + H2O + lipid A-core oligosaccharideSide 1 = ADP + phosphate + lipid A-core oligosaccharideSide 2.. In terms of biological role, involved in lipopolysaccharide (LPS) biosynthesis. Translocates lipid A-core from the inner to the outer leaflet of the inner membrane. Transmembrane domains (TMD) form a pore in the inner membrane and the ATP-binding domain (NBD) is responsible for energy generation. Shows ATPase activity. This Vibrio cholerae serotype O1 (strain ATCC 39315 / El Tor Inaba N16961) protein is ATP-dependent lipid A-core flippase.